We begin with the raw amino-acid sequence, 762 residues long: Centrosomal protein of 85 kDa (762 aa).

Disordered regions lie at residues 1-26 and 94-119; these read MAMQEKYPTEGISHVTSPSSDVIQKG and VMPSTLGTSPAKPNSTPVGPSSSKLP. Composition is skewed to polar residues over residues 14–26 and 98–111; these read HVTSPSSDVIQKG and TLGTSPAKPNSTPV. Ser-17 bears the Phosphoserine mark. Phosphoserine is present on residues Ser-126 and Ser-141. The segment at 257-433 is mediates interaction with NEK2 and is required for its function in the suppression of centrosome disjunction; it reads GLSKPLPSQV…QLIRESLKVA (177 aa). Coiled-coil stretches lie at residues 334-657 and 723-750; these read EHLL…RQAQ and PDVIKRKLEEVQQLRRDIEDLRTTMSDR. Residues 434–476 form a required for centrosome localization and for its function in the suppression of centrosome disjunction region; that stretch reads LQKHSEEVKKQEERVKGRDKHINNLKKKCQKESEQNREKQQRI. 2 stretches are compositionally biased toward basic and acidic residues: residues 443-455 and 463-474; these read KQEERVKGRDKHI and QKESEQNREKQQ. Disordered regions lie at residues 443 to 474 and 541 to 570; these read KQEERVKGRDKHINNLKKKCQKESEQNREKQQ and EAEFSSAGHSLQDKQSVEETSGEGPEVEME. Residue Ser-623 is modified to Phosphoserine.

Belongs to the CEP85 family. Homodimer. Interacts with STIL (via N-terminus); this interaction is essential for robust PLK4 activation and efficient centriole assembly and for PLK4-dependent cell migration. Interacts with PLK4; required for CEP85 to be able to drive centriole duplication and cell migration.

The protein localises to the cytoplasm. The protein resides in the cytoskeleton. It localises to the microtubule organizing center. Its subcellular location is the centrosome. It is found in the spindle pole. The protein localises to the nucleus. The protein resides in the nucleolus. It localises to the centriole. Its subcellular location is the cell cortex. Its function is as follows. Acts as a regulator of centriole duplication through a direct interaction with STIL, a key factor involved in the early steps of centriole formation. The CEP85-STIL protein complex acts as a modulator of PLK4-driven cytoskeletal rearrangements and directional cell motility. Acts as a negative regulator of NEK2 to maintain the centrosome integrity in interphase. Suppresses centrosome disjunction by inhibiting NEK2 kinase activity. The protein is Centrosomal protein of 85 kDa of Homo sapiens (Human).